Consider the following 364-residue polypeptide: E3 ubiquitin-protein ligase rnf146 (364 aa).

The interval 18-37 is disordered; it reads KKVSGEAVPEGSGSPSSPSL. Low complexity predominate over residues 22–34; that stretch reads GEAVPEGSGSPSS. The segment at 42–80 adopts an RING-type zinc-finger fold; the sequence is CPICLQSCVHPVRLPCRHIFCFLCVKGASWHSKRCALCR. Residues 102 to 178 form the WWE domain; the sequence is SATGGCGTGS…EHGRRRRMKR (77 aa). Positions 118, 121, 125, 155, 164, 174, and 186 each coordinate a glycoprotein. 2 disordered regions span residues 217–262 and 279–364; these read AAAE…PASS and NEQE…VTKV. Acidic residues-rich tracts occupy residues 281 to 295 and 308 to 322; these read QEPE…DDSA and TSDD…DENE.

Its subcellular location is the cytoplasm. It is found in the cytosol. The protein resides in the nucleus. The catalysed reaction is S-ubiquitinyl-[E2 ubiquitin-conjugating enzyme]-L-cysteine + [acceptor protein]-L-lysine = [E2 ubiquitin-conjugating enzyme]-L-cysteine + N(6)-ubiquitinyl-[acceptor protein]-L-lysine.. It participates in protein modification; protein ubiquitination. E3 ubiquitin-protein ligase that specifically binds poly-ADP-ribosylated proteins and mediates their ubiquitination and subsequent degradation. May regulate many important biological processes, such as cell survival and DNA damage response. Acts as an activator of the Wnt signaling pathway by mediating the ubiquitination of poly-ADP-ribosylated proteins. Neuroprotective protein. Protects against cell death induced by DNA damaging agents and rescues cells from G1 arrest. Promotes cell survival after gamma-irradiation. Facilitates DNA repair. The sequence is that of E3 ubiquitin-protein ligase rnf146 (rnf146) from Danio rerio (Zebrafish).